The primary structure comprises 271 residues: 3-methyl-2-oxobutanoate hydroxymethyltransferase (271 aa).

Mg(2+) contacts are provided by Asp53 and Asp92. 3-methyl-2-oxobutanoate is bound by residues 53–54, Asp92, and Lys120; that span reads DS. Glu122 lines the Mg(2+) pocket. The active-site Proton acceptor is the Glu189.

The protein belongs to the PanB family. In terms of assembly, homodecamer; pentamer of dimers. The cofactor is Mg(2+).

The protein localises to the cytoplasm. The catalysed reaction is 3-methyl-2-oxobutanoate + (6R)-5,10-methylene-5,6,7,8-tetrahydrofolate + H2O = 2-dehydropantoate + (6S)-5,6,7,8-tetrahydrofolate. It participates in cofactor biosynthesis; (R)-pantothenate biosynthesis; (R)-pantoate from 3-methyl-2-oxobutanoate: step 1/2. Functionally, catalyzes the reversible reaction in which hydroxymethyl group from 5,10-methylenetetrahydrofolate is transferred onto alpha-ketoisovalerate to form ketopantoate. This Burkholderia mallei (strain NCTC 10247) protein is 3-methyl-2-oxobutanoate hydroxymethyltransferase.